The sequence spans 1044 residues: Pre-mRNA-splicing factor ATP-dependent RNA helicase DHX16 (1044 aa).

Disordered stretches follow at residues 101 to 210 (EDSE…AYEE) and 374 to 394 (LQGN…QKES). Ser103, Ser106, and Ser107 each carry phosphoserine. Residues 119–130 (QKKRKKRKHLRK) show a composition bias toward basic residues. A compositionally biased stretch (acidic residues) spans 134–143 (EEEEEEEEEA). Ser163 carries the phosphoserine modification. A compositionally biased stretch (basic and acidic residues) spans 169–210 (RTERERLQDLEERDAFAERVRQRDKDRTRNVLERSDKKAYEE). The region spanning 412-576 (LAAIANHQVL…FDDAPVFRIP (165 aa)) is the Helicase ATP-binding domain. 425–432 (GETGSGKT) serves as a coordination point for ATP. Residues 523 to 526 (DEAH) carry the DEAH box motif. Positions 601–774 (SVLQIHVTQP…NVVLLLKSLG (174 aa)) constitute a Helicase C-terminal domain. Residue Thr715 is modified to Phosphothreonine.

Belongs to the DEAD box helicase family. DEAH subfamily. DDX16/PRP8 sub-subfamily. Component of pre-catalytic spliceosome complexes. Component of the minor spliceosome, which splices U12-type introns. Interacts with GPKOW. Interacts with TRIM6. Interacts with RIGI.

Its subcellular location is the nucleus. It is found in the nucleoplasm. The protein localises to the cytoplasm. It catalyses the reaction ATP + H2O = ADP + phosphate + H(+). Required for pre-mRNA splicing as a component of the spliceosome. Contributes to pre-mRNA splicing after spliceosome formation and prior to the first transesterification reaction. As a component of the minor spliceosome, involved in the splicing of U12-type introns in pre-mRNAs. Also plays a role in innate antiviral response by acting as a pattern recognition receptor sensing splicing signals in viral RNA. Mechanistically, TRIM6 promotes the interaction between unanchored 'Lys-48'-polyubiquitin chains and DHX16, leading to DHX16 interaction with RIGI and ssRNA to amplify RIGI-dependent innate antiviral immune responses. The sequence is that of Pre-mRNA-splicing factor ATP-dependent RNA helicase DHX16 (DHX16) from Pan troglodytes (Chimpanzee).